The primary structure comprises 98 residues: AQIVKLGGDDGALAFVPSKISVAAGEAIEFVNNAGFPHNIVFDEDAVPAGVDADAISYDDYLNSKGETVVRKLSTPGVYGVYCEPHAGAGMKMTITVQ.

In terms of domain architecture, Plastocyanin-like spans 1 to 98 (AQIVKLGGDD…AGMKMTITVQ (98 aa)). The Cu cation site is built by His-38, Cys-83, His-86, and Met-91.

It belongs to the plastocyanin family. The cofactor is Cu(2+).

It is found in the plastid. It localises to the chloroplast thylakoid membrane. In terms of biological role, participates in electron transfer between P700 and the cytochrome b6-f complex in photosystem I. The protein is Plastocyanin (PETE) of Ulva arasakii (Sea lettuce).